We begin with the raw amino-acid sequence, 247 residues long: Geranylgeranylglyceryl phosphate synthase (247 aa).

Mg(2+)-binding residues include aspartate 23 and serine 52. Sn-glycerol 1-phosphate is bound by residues 171–177, 203–204, and 225–226; these read YLEAGSG, GG, and GT.

This sequence belongs to the GGGP/HepGP synthase family. Group II subfamily. Mg(2+) is required as a cofactor.

It is found in the cytoplasm. It catalyses the reaction sn-glycerol 1-phosphate + (2E,6E,10E)-geranylgeranyl diphosphate = sn-3-O-(geranylgeranyl)glycerol 1-phosphate + diphosphate. It functions in the pathway membrane lipid metabolism; glycerophospholipid metabolism. Functionally, prenyltransferase that catalyzes the transfer of the geranylgeranyl moiety of geranylgeranyl diphosphate (GGPP) to the C3 hydroxyl of sn-glycerol-1-phosphate (G1P). This reaction is the first ether-bond-formation step in the biosynthesis of archaeal membrane lipids. The protein is Geranylgeranylglyceryl phosphate synthase of Methanococcoides burtonii (strain DSM 6242 / NBRC 107633 / OCM 468 / ACE-M).